Here is a 221-residue protein sequence, read N- to C-terminus: Iron-sulfur cluster repair protein YtfE (221 aa).

The protein belongs to the RIC family. YtfE subfamily. In terms of assembly, homodimer.

It localises to the cytoplasm. Di-iron-containing protein involved in the repair of iron-sulfur clusters damaged by oxidative and nitrosative stress conditions. This is Iron-sulfur cluster repair protein YtfE from Pectobacterium carotovorum subsp. carotovorum (strain PC1).